We begin with the raw amino-acid sequence, 104 residues long: Large ribosomal subunit protein uL23 (104 aa).

This sequence belongs to the universal ribosomal protein uL23 family. As to quaternary structure, part of the 50S ribosomal subunit. Contacts protein L29, and trigger factor when it is bound to the ribosome.

One of the early assembly proteins it binds 23S rRNA. One of the proteins that surrounds the polypeptide exit tunnel on the outside of the ribosome. Forms the main docking site for trigger factor binding to the ribosome. The protein is Large ribosomal subunit protein uL23 of Paraburkholderia phymatum (strain DSM 17167 / CIP 108236 / LMG 21445 / STM815) (Burkholderia phymatum).